Here is a 216-residue protein sequence, read N- to C-terminus: MSIAHIVDWRLYVVTDAGLSRGRSHRAVIEAAIVGGATVVQYREKHASTRQMIEEALELRDLTRRAGVPLIVNDRVDVALAVDADGVHVGQDDMPVALARRLIGNKLLGVSAHNLSEALQAVRDGADYLGVGPIFATTTKPDAAAPIGLDGLRAIRQHVSIPIVAIGGINQANAADVMRAGADGIAVVSAVVAADDVTAAARQLRALVSVTQEKAL.

4-amino-2-methyl-5-(diphosphooxymethyl)pyrimidine-binding positions include 41–45 (QYREK) and asparagine 73. Residues aspartate 74 and aspartate 93 each coordinate Mg(2+). Serine 111 contacts 4-amino-2-methyl-5-(diphosphooxymethyl)pyrimidine. 137 to 139 (TTT) contributes to the 2-[(2R,5Z)-2-carboxy-4-methylthiazol-5(2H)-ylidene]ethyl phosphate binding site. Lysine 140 serves as a coordination point for 4-amino-2-methyl-5-(diphosphooxymethyl)pyrimidine. 2-[(2R,5Z)-2-carboxy-4-methylthiazol-5(2H)-ylidene]ethyl phosphate contacts are provided by residues glycine 168 and 188–189 (VS).

The protein belongs to the thiamine-phosphate synthase family. Mg(2+) serves as cofactor.

The catalysed reaction is 2-[(2R,5Z)-2-carboxy-4-methylthiazol-5(2H)-ylidene]ethyl phosphate + 4-amino-2-methyl-5-(diphosphooxymethyl)pyrimidine + 2 H(+) = thiamine phosphate + CO2 + diphosphate. The enzyme catalyses 2-(2-carboxy-4-methylthiazol-5-yl)ethyl phosphate + 4-amino-2-methyl-5-(diphosphooxymethyl)pyrimidine + 2 H(+) = thiamine phosphate + CO2 + diphosphate. It catalyses the reaction 4-methyl-5-(2-phosphooxyethyl)-thiazole + 4-amino-2-methyl-5-(diphosphooxymethyl)pyrimidine + H(+) = thiamine phosphate + diphosphate. It participates in cofactor biosynthesis; thiamine diphosphate biosynthesis; thiamine phosphate from 4-amino-2-methyl-5-diphosphomethylpyrimidine and 4-methyl-5-(2-phosphoethyl)-thiazole: step 1/1. Functionally, condenses 4-methyl-5-(beta-hydroxyethyl)thiazole monophosphate (THZ-P) and 2-methyl-4-amino-5-hydroxymethyl pyrimidine pyrophosphate (HMP-PP) to form thiamine monophosphate (TMP). The chain is Thiamine-phosphate synthase from Chloroflexus aurantiacus (strain ATCC 29366 / DSM 635 / J-10-fl).